The chain runs to 404 residues: Keratin, type I cuticular Ha3-II (404 aa).

Positions 1–56 are head; the sequence is MPYNFCLPSLSCRTSCSSRPCVPPSCHGYTLPGACNIPANVSNCNWFCEGSFNGSE. The region spanning 56 to 367 is the IF rod domain; sequence EKETMQFLND…SLLESEDCKL (312 aa). The coil 1A stretch occupies residues 57–91; sequence KETMQFLNDRLASYLEKVRQLERDNAELENLIRER. Positions 92-102 are linker 1; that stretch reads SQQQEPLLCPS. The segment at 103–203 is coil 1B; sequence YQSYFKTIEE…HEQEVNTLRC (101 aa). Positions 204-219 are linker 12; that stretch reads QLGDRLNVEVDAAPAV. The coil 2 stretch occupies residues 220–363; sequence DLNQVLNETR…NTYRSLLESE (144 aa). The tract at residues 364–404 is tail; that stretch reads DCKLPSNPCATTNACEKPIGSCVTNPCGPRSRCGPCNTFGY.

The protein belongs to the intermediate filament family.

This is Keratin, type I cuticular Ha3-II (KRT33B) from Homo sapiens (Human).